A 299-amino-acid chain; its full sequence is Putative ammonium transporter 4 member 1 (299 aa).

5 helical membrane passes run 16–36 (AWPL…LVIL), 59–79 (VLLT…GFNG), 104–124 (LLVW…ISAV), 158–178 (VLHT…LLLL), and 218–238 (AGIA…CLAV).

Belongs to the ammonia transporter channel (TC 1.A.11.2) family.

It is found in the membrane. The chain is Putative ammonium transporter 4 member 1 (AMT4-1) from Oryza sativa subsp. japonica (Rice).